We begin with the raw amino-acid sequence, 601 residues long: MSSDSMRNIRNFSIIAHVDHGKSTLADRIIQLCGGLQAREMEAQVLDSNPIERERGITIKAQSVSLPYTAKDGQTYHLNFIDTPGHVDFSYEVSRSLAACEGALLVVDAAQGVEAQSVANCYTAVEQGLEVVPVLNKIDLPTADVDRAKAEIEAVIGIDAEDAVAVSAKTGLNIDLVLEAIVHRIPPPKPRDTDKLQALIIDSWFDNYLGVVSLVRVMQGEIKPGSKILVMSTGRTHLVDKVGVFTPKRKELPALGAGEVGWINASIKDVHGAPVGDTLTLAGDPAPHALPGFQEMQPRVFAGLFPVDAEDYPDLREALDKLRLNDAALRFEPESSEAMGFGFRCGFLGMLHMEIVQERLEREYNLDLISTAPTVVYEVLKTDGTVINMDNPAKLPQLNLVQEIREPIIRANVLTPEEYIGNIIKLCEEKRGTQIGINYLGSQVQISYELPMAEVVLDFFDKLKSVSRGYASLDYHFVRFDAGPFVRVDVLINGDKVDALSLIVHRGHADRRGRELCEKMKDLIPRQMFDVAIQAAIGSQIISRSTVKAMRKNVLAKCYGGDVSRKKKLLEKQKEGKKRMKQVGRVEIPQEAFLAVLQMDK.

The 183-residue stretch at 7–189 (RNIRNFSIIA…AIVHRIPPPK (183 aa)) folds into the tr-type G domain. GTP-binding positions include 19–24 (DHGKST) and 136–139 (NKID).

It belongs to the TRAFAC class translation factor GTPase superfamily. Classic translation factor GTPase family. LepA subfamily.

The protein localises to the cell inner membrane. It catalyses the reaction GTP + H2O = GDP + phosphate + H(+). Required for accurate and efficient protein synthesis under certain stress conditions. May act as a fidelity factor of the translation reaction, by catalyzing a one-codon backward translocation of tRNAs on improperly translocated ribosomes. Back-translocation proceeds from a post-translocation (POST) complex to a pre-translocation (PRE) complex, thus giving elongation factor G a second chance to translocate the tRNAs correctly. Binds to ribosomes in a GTP-dependent manner. The polypeptide is Elongation factor 4 (Xanthomonas axonopodis pv. citri (strain 306)).